The primary structure comprises 616 residues: Dihydroxy-acid dehydratase (616 aa).

Asp-81 contributes to the Mg(2+) binding site. Cys-122 is a binding site for [2Fe-2S] cluster. Mg(2+) is bound by residues Asp-123 and Lys-124. Lys-124 bears the N6-carboxylysine mark. Cys-195 lines the [2Fe-2S] cluster pocket. Glu-491 contacts Mg(2+). Residue Ser-517 is the Proton acceptor of the active site.

This sequence belongs to the IlvD/Edd family. In terms of assembly, homodimer. [2Fe-2S] cluster serves as cofactor. It depends on Mg(2+) as a cofactor.

The enzyme catalyses (2R)-2,3-dihydroxy-3-methylbutanoate = 3-methyl-2-oxobutanoate + H2O. It carries out the reaction (2R,3R)-2,3-dihydroxy-3-methylpentanoate = (S)-3-methyl-2-oxopentanoate + H2O. It participates in amino-acid biosynthesis; L-isoleucine biosynthesis; L-isoleucine from 2-oxobutanoate: step 3/4. The protein operates within amino-acid biosynthesis; L-valine biosynthesis; L-valine from pyruvate: step 3/4. In terms of biological role, functions in the biosynthesis of branched-chain amino acids. Catalyzes the dehydration of (2R,3R)-2,3-dihydroxy-3-methylpentanoate (2,3-dihydroxy-3-methylvalerate) into 2-oxo-3-methylpentanoate (2-oxo-3-methylvalerate) and of (2R)-2,3-dihydroxy-3-methylbutanoate (2,3-dihydroxyisovalerate) into 2-oxo-3-methylbutanoate (2-oxoisovalerate), the penultimate precursor to L-isoleucine and L-valine, respectively. This is Dihydroxy-acid dehydratase from Shewanella woodyi (strain ATCC 51908 / MS32).